The following is a 1921-amino-acid chain: Disks large homolog 5 (1921 aa).

Positions 1 to 90 (MEPQRRELLA…HLLPILYLNG (90 aa)) constitute a CARD domain. The disordered stretch occupies residues 116–143 (ESSSSLSSVGTTGKAPSPPPLLTEQQAN). A coiled-coil region spans residues 139-601 (EQQANDTVEN…KEARFRQLMA (463 aa)). Residues serine 264 and serine 295 each carry the phosphoserine modification. PDZ domains lie at 620–710 (VVEF…RRRK) and 705–796 (VVRR…LKVF). The disordered stretch occupies residues 857 to 898 (ELGHSGGSSSFLHKPFSGSSSPVSPQACPSTSERSLNSFRSD). The segment covering 873-898 (SGSSSPVSPQACPSTSERSLNSFRSD) has biased composition (polar residues). Position 900 is a phosphoserine (serine 900). Residues 930–1121 (EVPLDKIDPE…RPKSAPSFRP (192 aa)) form a disordered region. Phosphothreonine is present on threonine 984. The residue at position 1000 (serine 1000) is a Phosphoserine. Threonine 1011 is subject to Phosphothreonine. Residues 1017-1030 (RRSDSIKFQHRLET) are compositionally biased toward basic and acidic residues. The residue at position 1021 (serine 1021) is a Phosphoserine. A compositionally biased stretch (pro residues) spans 1045-1055 (TSPPSAPPPSM). Threonine 1183 is modified (phosphothreonine). Disordered regions lie at residues 1204-1227 (VLPC…SVQH), 1243-1266 (YSEM…SSSN), and 1280-1343 (PRYP…KDRP). Serine 1209 carries the phosphoserine modification. Over residues 1217–1227 (GSQSLSPSVQH) the composition is skewed to polar residues. Residues 1252–1266 (SNSLPSSARLGSSSN) show a composition bias toward low complexity. A Phosphoserine modification is found at serine 1263. The span at 1292–1324 (GSLSHSECSTPPRSPLNIDTLSSCSQPQTTAST) shows a compositional bias: polar residues. A Phosphoserine modification is found at serine 1334. Residues 1350–1429 (HVKVQKGSEP…TITILAQYNP (80 aa)) enclose the PDZ 3 domain. Polar residues-rich tracts occupy residues 1434 to 1443 (LNSHSRSSSH), 1450 to 1460 (PHSTLQGSSAG), and 1483 to 1495 (AKQS…SVGD). Residues 1434–1501 (LNSHSRSSSH…SVGDTTKKTP (68 aa)) form a disordered region. In terms of domain architecture, PDZ 4 spans 1504–1585 (RIVFIKKSQL…SLRLKVQYRH (82 aa)). One can recognise an SH3 domain in the interval 1596–1664 (GDSFYIRALY…PSKYVMDQEF (69 aa)). Phosphoserine is present on serine 1669. Positions 1724-1907 (DSVSLAYQRV…ICTQILAMVS (184 aa)) constitute a Guanylate kinase-like domain.

The protein belongs to the MAGUK family. In terms of assembly, interacts with MPP1. Interacts with CTNNB1 and with the third SH3 domain of SORBS3 to form a ternary complex. Interacts (via coiled-coil domain) with MARK3. Interacts (via PDZ domain 3) with STK3/MST2 and STK4/MST1. Interacts with SCRIB. Interacts with CTNB1. Interacts with SMO and (via PDZ4 or guanylate kinase-like domain) with KIF7. As to expression, brain (at protein level).

It localises to the cell junction. The protein localises to the cell membrane. It is found in the postsynaptic density. Its subcellular location is the cytoplasm. The protein resides in the cytoskeleton. It localises to the cilium basal body. Functionally, acts as a regulator of the Hippo signaling pathway. Negatively regulates the Hippo signaling pathway by mediating the interaction of MARK3 with STK3/4, bringing them together to promote MARK3-dependent hyperphosphorylation and inactivation of STK3 kinase activity toward LATS1. Positively regulates the Hippo signaling by mediating the interaction of SCRIB with STK4/MST1 and LATS1 which is important for the activation of the Hippo signaling pathway. Involved in regulating cell proliferation, maintenance of epithelial polarity, epithelial-mesenchymal transition (EMT), cell migration and invasion. Plays an important role in dendritic spine formation and synaptogenesis in cortical neurons; regulates synaptogenesis by enhancing the cell surface localization of N-cadherin. Acts as a positive regulator of hedgehog (Hh) signaling pathway. Plays a critical role in the early point of the SMO activity cycle by interacting with SMO at the ciliary base to induce the accumulation of KIF7 and GLI2 at the ciliary tip for GLI2 activation. This is Disks large homolog 5 (Dlg5) from Mus musculus (Mouse).